Consider the following 379-residue polypeptide: Cobalt-precorrin-5B C(1)-methyltransferase (379 aa).

Belongs to the CbiD family.

The catalysed reaction is Co-precorrin-5B + S-adenosyl-L-methionine = Co-precorrin-6A + S-adenosyl-L-homocysteine. It functions in the pathway cofactor biosynthesis; adenosylcobalamin biosynthesis; cob(II)yrinate a,c-diamide from sirohydrochlorin (anaerobic route): step 6/10. Its function is as follows. Catalyzes the methylation of C-1 in cobalt-precorrin-5B to form cobalt-precorrin-6A. In Edwardsiella ictaluri (strain 93-146), this protein is Cobalt-precorrin-5B C(1)-methyltransferase.